Reading from the N-terminus, the 285-residue chain is UPF0173 metal-dependent hydrolase Pnuc_1524 (285 aa).

This sequence belongs to the UPF0173 family.

The protein is UPF0173 metal-dependent hydrolase Pnuc_1524 of Polynucleobacter asymbioticus (strain DSM 18221 / CIP 109841 / QLW-P1DMWA-1) (Polynucleobacter necessarius subsp. asymbioticus).